The following is a 298-amino-acid chain: Probable endonuclease 4 (298 aa).

His69, His111, Glu146, Asp180, His183, His215, Asp228, His230, and Glu260 together coordinate Zn(2+).

Belongs to the AP endonuclease 2 family. Zn(2+) serves as cofactor.

It catalyses the reaction Endonucleolytic cleavage to 5'-phosphooligonucleotide end-products.. Its function is as follows. Endonuclease IV plays a role in DNA repair. It cleaves phosphodiester bonds at apurinic or apyrimidinic (AP) sites, generating a 3'-hydroxyl group and a 5'-terminal sugar phosphate. This Bacillus cereus (strain AH820) protein is Probable endonuclease 4.